Consider the following 617-residue polypeptide: MLFLRRIAVVFFVFTSFSAAQNSTCPLDFSVLEPFRRPKPDGATTCQYLLQGLRLLYSHHLRQTGSFLPPPESAASCWAALQSSVAGFLPRFDVRSTCGFQTPWISQGCMDITTRSQFESLIPNSSLATTAMRCNTSLESNTPCASCTQSLSAFQPYLSGPSLGNVSDCASFPSIYAAAFANSLGPTDKGTAKCLFQLDLASPTSSGANKVKVLVSSFSVLLVASVLVITAWFWYCRRKKSKLLKPRDTSLEAGTQSRLDSMSESTTLVKFSFDEIKKATNNFSRHNIIGRGGYGNVFKGALPDGTQVAFKRFKNCSAGGDANFAHEVEVIASIRHVNLLALRGYCTATTPYEGHQRIIVCDLVSNGSLHDHLFGDLEAQLAWPLRQRIALGMARGLAYLHYGAQPSIIHRDIKASNILLDERFEAKVADFGLAKFNPEGMTHMSTRVAGTMGYVAPEYALYGQLTEKSDVYSFGVVLLELLSRRKAIVTDEEGQPVSVADWAWSLVREGQTLDVVEDGMPEKGPPEVLEKYVLIAVLCSHPQLHARPTMDQVVKMLESNEFTVIAIPQRPIPLVACREEIDRSVSSSSGSGKLTSPTGYQAFSFGGDGPSGNTNTT.

A signal peptide spans 1 to 20 (MLFLRRIAVVFFVFTSFSAA). Topologically, residues 21–212 (QNSTCPLDFS…PTSSGANKVK (192 aa)) are extracellular. N-linked (GlcNAc...) asparagine glycosylation is found at Asn22, Asn124, Asn135, and Asn165. The chain crosses the membrane as a helical span at residues 213-233 (VLVSSFSVLLVASVLVITAWF). Residues 234–617 (WYCRRKKSKL…DGPSGNTNTT (384 aa)) lie on the Cytoplasmic side of the membrane. A Protein kinase domain is found at 283–563 (FSRHNIIGRG…VKMLESNEFT (281 aa)). ATP contacts are provided by residues 289–297 (IGRGGYGNV) and Lys311. Asp412 functions as the Proton acceptor in the catalytic mechanism. The interval 585 to 617 (VSSSSGSGKLTSPTGYQAFSFGGDGPSGNTNTT) is disordered.

The protein belongs to the protein kinase superfamily. Ser/Thr protein kinase family. In terms of tissue distribution, expressed in the whole plant at low levels.

The protein resides in the cell membrane. It catalyses the reaction L-seryl-[protein] + ATP = O-phospho-L-seryl-[protein] + ADP + H(+). The enzyme catalyses L-threonyl-[protein] + ATP = O-phospho-L-threonyl-[protein] + ADP + H(+). This chain is Probable LRR receptor-like serine/threonine-protein kinase RKF3 (RKF3), found in Arabidopsis thaliana (Mouse-ear cress).